A 209-amino-acid chain; its full sequence is Ribosomal RNA large subunit methyltransferase E (209 aa).

S-adenosyl-L-methionine contacts are provided by Gly63, Trp65, Asp83, Asp99, and Asp124. Lys164 (proton acceptor) is an active-site residue.

This sequence belongs to the class I-like SAM-binding methyltransferase superfamily. RNA methyltransferase RlmE family.

It localises to the cytoplasm. The enzyme catalyses uridine(2552) in 23S rRNA + S-adenosyl-L-methionine = 2'-O-methyluridine(2552) in 23S rRNA + S-adenosyl-L-homocysteine + H(+). Functionally, specifically methylates the uridine in position 2552 of 23S rRNA at the 2'-O position of the ribose in the fully assembled 50S ribosomal subunit. This Shewanella amazonensis (strain ATCC BAA-1098 / SB2B) protein is Ribosomal RNA large subunit methyltransferase E.